The primary structure comprises 735 residues: Serine/threonine-protein kinase BRSK2 (735 aa).

Positions 20-271 (YRLEKTLGKG…LEHIQKHIWY (252 aa)) constitute a Protein kinase domain. ATP-binding positions include 26–34 (LGKGQTGLV) and lysine 49. Catalysis depends on aspartate 142, which acts as the Proton acceptor. Threonine 175 bears the Phosphothreonine; by LKB1 mark. Threonine 261 carries the phosphothreonine; by PKA modification. Serine 295 is modified (phosphoserine). One can recognise a UBA domain in the interval 298–340 (DIDPDVLDSMHSLGCFRDRNKLLQDLLSEEENQEKMIYFLLLD). Residues 346-367 (PSHEDEDLPPRNEIDPPRKRVD) are compositionally biased toward basic and acidic residues. Disordered regions lie at residues 346–476 (PSHE…GVPW), 493–514 (FHRR…PESS), and 682–735 (KNGQ…REQP). 7 positions are modified to phosphoserine: serine 368, serine 383, serine 394, serine 413, alanine 417, serine 424, and serine 428. Positions 411 to 429 (SRSISGASSGLSTSPLSSP) are enriched in low complexity. Residues 432–446 (TPHPSPRGSPLPTPK) show a composition bias toward pro residues. Serine 456 bears the Phosphoserine mark. Phosphothreonine occurs at positions 460, 464, and 510. Serine 513 and serine 514 each carry phosphoserine.

It belongs to the protein kinase superfamily. CAMK Ser/Thr protein kinase family. SNF1 subfamily. As to quaternary structure, interacts with FZR1, a regulatory subunit of the APC ubiquitin ligase complex. Interacts with COPS5. Interacts with PAK1. Mg(2+) serves as cofactor. In terms of processing, may be phosphorylated at Thr-261 by PKA. Phosphorylated at Thr-175 by STK11/LKB1 in complex with STE20-related adapter-alpha (STRADA) pseudo kinase and CAB39. Not phosphorylated at Thr-175 by CaMKK2. In contrast, it is phosphorylated and activated by CaMKK1. May be inactivated via dephosphorylation of Thr-175 by PP2C. Post-translationally, polyubiquitinated by the APC complex in conjunction with FZR1, leading to its proteasomal degradation. Targeted for proteasomal degradation by interaction with COPS5. BRSK2 levels change during the cell cycle. BRSK2 levels are low at the G1/S boundary and gradually increase as cells progress into G2 phase. BRSK2 levels decrease rapidly at the end of mitosis.

The protein localises to the cytoplasm. It localises to the cytoskeleton. The protein resides in the microtubule organizing center. Its subcellular location is the centrosome. It is found in the perinuclear region. The protein localises to the endoplasmic reticulum. The catalysed reaction is L-seryl-[protein] + ATP = O-phospho-L-seryl-[protein] + ADP + H(+). The enzyme catalyses L-threonyl-[protein] + ATP = O-phospho-L-threonyl-[protein] + ADP + H(+). It carries out the reaction L-seryl-[tau protein] + ATP = O-phospho-L-seryl-[tau protein] + ADP + H(+). It catalyses the reaction L-threonyl-[tau protein] + ATP = O-phospho-L-threonyl-[tau protein] + ADP + H(+). Activated by phosphorylation on Thr-175 by STK11/LKB1. Functionally, serine/threonine-protein kinase that plays a key role in polarization of neurons and axonogenesis, cell cycle progress and insulin secretion. Phosphorylates CDK16, CDC25C, MAPT/TAU, PAK1 and WEE1. Following phosphorylation and activation by STK11/LKB1, acts as a key regulator of polarization of cortical neurons, probably by mediating phosphorylation of microtubule-associated proteins such as MAPT/TAU at 'Thr-523' and 'Ser-573'. Also regulates neuron polarization by mediating phosphorylation of WEE1 at 'Ser-642' in post-mitotic neurons, leading to down-regulate WEE1 activity in polarized neurons. Plays a role in the regulation of the mitotic cell cycle progress and the onset of mitosis. Plays a role in the regulation of insulin secretion in response to elevated glucose levels, probably via phosphorylation of CDK16 and PAK1. While BRSK2 phosphorylated at Thr-175 can inhibit insulin secretion, BRSK2 phosphorylated at Thr-261 can promote insulin secretion. Regulates reorganization of the actin cytoskeleton. May play a role in the apoptotic response triggered by endoplasmic reticulum (ER) stress. This Rattus norvegicus (Rat) protein is Serine/threonine-protein kinase BRSK2 (Brsk2).